Here is a 153-residue protein sequence, read N- to C-terminus: Small ribosomal subunit protein bS6 (153 aa).

The segment at glutamate 94–alanine 153 is disordered.

This sequence belongs to the bacterial ribosomal protein bS6 family.

In terms of biological role, binds together with bS18 to 16S ribosomal RNA. In Agrobacterium fabrum (strain C58 / ATCC 33970) (Agrobacterium tumefaciens (strain C58)), this protein is Small ribosomal subunit protein bS6.